We begin with the raw amino-acid sequence, 497 residues long: Probable sensor kinase SilS (497 aa).

The Cytoplasmic segment spans residues methionine 1–arginine 15. The chain crosses the membrane as a helical span at residues leucine 16 to leucine 36. At histidine 37–lysine 186 the chain is on the periplasmic side. The helical transmembrane segment at asparagine 187–valine 207 threads the bilayer. The 54-residue stretch at arginine 208 to threonine 261 folds into the HAMP domain. Residues arginine 208–glutamate 497 lie on the Cytoplasmic side of the membrane. A Histidine kinase domain is found at aspartate 269–glutamate 487. Histidine 272 is modified (phosphohistidine; by autocatalysis).

It localises to the cell inner membrane. The enzyme catalyses ATP + protein L-histidine = ADP + protein N-phospho-L-histidine.. Component of the sil cation-efflux system that confers resistance to silver. Probable member of a two-component regulatory system SilS/SilR. May activate SilR by phosphorylation. This is Probable sensor kinase SilS (silS) from Salmonella typhimurium.